The following is a 328-amino-acid chain: Ubiquitin-conjugating enzyme E2 Z (328 aa).

Positions 71–225 (QCILRIKRDI…IRHETMRVAV (155 aa)) constitute a UBC core domain. The active-site Glycyl thioester intermediate is the Cys160. Residues 295–328 (RLREKCPPEDNDGDSDSDTSSSGTDPDSQGSSQP) form a disordered region. Positions 312–328 (DTSSSGTDPDSQGSSQP) are enriched in low complexity.

The protein belongs to the ubiquitin-conjugating enzyme family.

It localises to the cytoplasm. The protein localises to the nucleus. It catalyses the reaction S-ubiquitinyl-[E1 ubiquitin-activating enzyme]-L-cysteine + [E2 ubiquitin-conjugating enzyme]-L-cysteine = [E1 ubiquitin-activating enzyme]-L-cysteine + S-ubiquitinyl-[E2 ubiquitin-conjugating enzyme]-L-cysteine.. It functions in the pathway protein modification; protein ubiquitination. Its function is as follows. Catalyzes the covalent attachment of ubiquitin to other proteins. May be involved in apoptosis regulation. The chain is Ubiquitin-conjugating enzyme E2 Z (ube2z) from Danio rerio (Zebrafish).